The following is a 372-amino-acid chain: DNA replication and repair protein RecF (372 aa).

Position 30-37 (30-37 (GENAQGKT)) interacts with ATP.

This sequence belongs to the RecF family.

The protein localises to the cytoplasm. In terms of biological role, the RecF protein is involved in DNA metabolism; it is required for DNA replication and normal SOS inducibility. RecF binds preferentially to single-stranded, linear DNA. It also seems to bind ATP. This Exiguobacterium sp. (strain ATCC BAA-1283 / AT1b) protein is DNA replication and repair protein RecF.